Reading from the N-terminus, the 495-residue chain is NADH-ubiquinone oxidoreductase chain 4 (495 aa).

The next 11 helical transmembrane spans lie at 9 to 29 (YSNL…PLFI), 39 to 59 (LIGL…RIQF), 89 to 109 (ISLF…SVGW), 139 to 159 (LLLF…IIGV), 173 to 193 (FFLY…LILF), 214 to 234 (IFLW…VPVH), 272 to 292 (FPEA…IAII), 313 to 333 (VAHM…GIGG), 335 to 355 (ILPM…VGVL), 367 to 387 (YGGL…FTLA), and 413 to 433 (LVAT…LWLY).

It belongs to the complex I subunit 4 family.

The protein resides in the mitochondrion membrane. The catalysed reaction is a ubiquinone + NADH + 5 H(+)(in) = a ubiquinol + NAD(+) + 4 H(+)(out). Its function is as follows. Core subunit of the mitochondrial membrane respiratory chain NADH dehydrogenase (Complex I) that is believed to belong to the minimal assembly required for catalysis. Complex I functions in the transfer of electrons from NADH to the respiratory chain. The immediate electron acceptor for the enzyme is believed to be ubiquinone. The sequence is that of NADH-ubiquinone oxidoreductase chain 4 (ND4) from Brassica campestris (Field mustard).